A 64-amino-acid chain; its full sequence is Outer envelope membrane protein 7 (64 aa).

At 1-11 the chain is on the chloroplast intermembrane side; sequence MGKTSGAKQAT. Residues 12 to 32 traverse the membrane as a helical segment; sequence VVVAAMALGWLAIEIAFKPFL. The AKR2A-binding sequence (ABS) required for chloroplast outer envelope membrane targeting motif lies at 29 to 35; that stretch reads KPFLDKF. The Cytoplasmic portion of the chain corresponds to 33–64; sequence DKFRSSIDKSDPTKDPDDFDTAATATTSKEGL. Basic and acidic residues predominate over residues 39 to 48; it reads IDKSDPTKDP. The tract at residues 39–64 is disordered; sequence IDKSDPTKDPDDFDTAATATTSKEGL. The segment covering 53–64 has biased composition (low complexity); that stretch reads TAATATTSKEGL.

In terms of assembly, interacts with AKR2A. As to expression, confined to green tissues.

It is found in the plastid. It localises to the chloroplast outer membrane. This chain is Outer envelope membrane protein 7, found in Arabidopsis thaliana (Mouse-ear cress).